A 94-amino-acid chain; its full sequence is Large ribosomal subunit protein bL27 (94 aa).

A propeptide spanning residues 1 to 9 (MLKLNLQFF) is cleaved from the precursor.

It belongs to the bacterial ribosomal protein bL27 family. In terms of processing, the N-terminus is cleaved by ribosomal processing cysteine protease Prp.

The sequence is that of Large ribosomal subunit protein bL27 from Staphylococcus aureus (strain Mu3 / ATCC 700698).